A 339-amino-acid chain; its full sequence is Dihydroorotate dehydrogenase (quinone) (339 aa).

FMN contacts are provided by residues alanine 64–lysine 68 and threonine 88. Lysine 68 is a substrate binding site. Asparagine 113–phenylalanine 117 lines the substrate pocket. Asparagine 141 and asparagine 174 together coordinate FMN. Substrate is bound at residue asparagine 174. The Nucleophile role is filled by serine 177. Asparagine 179 is a binding site for substrate. 2 residues coordinate FMN: lysine 219 and threonine 247. Position 248 to 249 (asparagine 248 to threonine 249) interacts with substrate. Residues glycine 270, glycine 299, and tyrosine 320–serine 321 each bind FMN.

This sequence belongs to the dihydroorotate dehydrogenase family. Type 2 subfamily. As to quaternary structure, monomer. It depends on FMN as a cofactor.

It localises to the cell membrane. The catalysed reaction is (S)-dihydroorotate + a quinone = orotate + a quinol. Its pathway is pyrimidine metabolism; UMP biosynthesis via de novo pathway; orotate from (S)-dihydroorotate (quinone route): step 1/1. Its function is as follows. Catalyzes the conversion of dihydroorotate to orotate with quinone as electron acceptor. This Haemophilus influenzae (strain 86-028NP) protein is Dihydroorotate dehydrogenase (quinone).